The following is a 318-amino-acid chain: Isoaspartyl peptidase/L-asparaginase (318 aa).

Threonine 180 (nucleophile) is an active-site residue. Substrate is bound by residues 208-211 and 229-232; these read RVSD and TGIG.

It belongs to the Ntn-hydrolase family. As to quaternary structure, heterotetramer of two alpha and two beta chains arranged as a dimer of alpha/beta heterodimers. In terms of processing, cleaved into an alpha and beta chain by autocatalysis; this activates the enzyme. The N-terminal residue of the beta subunit is responsible for the nucleophile hydrolase activity.

It carries out the reaction Cleavage of a beta-linked Asp residue from the N-terminus of a polypeptide.. Degrades proteins damaged by L-isoaspartyl residue formation (also known as beta-Asp residues). Probably performs the final step in the degradation of the reserve polymer cyanophycin (depolymerizes the building block L-beta-Asp-Arg). Also has L-asparaginase activity. The polypeptide is Isoaspartyl peptidase/L-asparaginase (Nostoc sp. (strain PCC 7120 / SAG 25.82 / UTEX 2576)).